We begin with the raw amino-acid sequence, 456 residues long: Bifunctional protein GlmU (456 aa).

A pyrophosphorylase region spans residues 1 to 229 (MLNSAMSVVI…ISETDGVNNR (229 aa)). UDP-N-acetyl-alpha-D-glucosamine is bound by residues 11 to 14 (LAAG), Lys-25, Gln-76, 81 to 82 (GT), 103 to 105 (YGD), Gly-140, Glu-154, Asn-169, and Asn-227. Asp-105 lines the Mg(2+) pocket. Asn-227 provides a ligand contact to Mg(2+). The segment at 230–250 (LQLSRLERIYQAEQAEKLLLS) is linker. Residues 251–456 (GVMLRDPARF…QGWQRPVKKK (206 aa)) are N-acetyltransferase. UDP-N-acetyl-alpha-D-glucosamine is bound by residues Arg-333 and Lys-351. The active-site Proton acceptor is His-363. The UDP-N-acetyl-alpha-D-glucosamine site is built by Tyr-366 and Asn-377. Residues Ala-380, 386 to 387 (NY), Ser-405, Ala-423, and Arg-440 contribute to the acetyl-CoA site.

This sequence in the N-terminal section; belongs to the N-acetylglucosamine-1-phosphate uridyltransferase family. The protein in the C-terminal section; belongs to the transferase hexapeptide repeat family. Homotrimer. Mg(2+) is required as a cofactor.

The protein resides in the cytoplasm. It catalyses the reaction alpha-D-glucosamine 1-phosphate + acetyl-CoA = N-acetyl-alpha-D-glucosamine 1-phosphate + CoA + H(+). The catalysed reaction is N-acetyl-alpha-D-glucosamine 1-phosphate + UTP + H(+) = UDP-N-acetyl-alpha-D-glucosamine + diphosphate. It participates in nucleotide-sugar biosynthesis; UDP-N-acetyl-alpha-D-glucosamine biosynthesis; N-acetyl-alpha-D-glucosamine 1-phosphate from alpha-D-glucosamine 6-phosphate (route II): step 2/2. Its pathway is nucleotide-sugar biosynthesis; UDP-N-acetyl-alpha-D-glucosamine biosynthesis; UDP-N-acetyl-alpha-D-glucosamine from N-acetyl-alpha-D-glucosamine 1-phosphate: step 1/1. It functions in the pathway bacterial outer membrane biogenesis; LPS lipid A biosynthesis. Its function is as follows. Catalyzes the last two sequential reactions in the de novo biosynthetic pathway for UDP-N-acetylglucosamine (UDP-GlcNAc). The C-terminal domain catalyzes the transfer of acetyl group from acetyl coenzyme A to glucosamine-1-phosphate (GlcN-1-P) to produce N-acetylglucosamine-1-phosphate (GlcNAc-1-P), which is converted into UDP-GlcNAc by the transfer of uridine 5-monophosphate (from uridine 5-triphosphate), a reaction catalyzed by the N-terminal domain. The sequence is that of Bifunctional protein GlmU from Salmonella typhi.